The following is a 267-amino-acid chain: Exosome complex component Rrp42 (267 aa).

The protein belongs to the RNase PH family. Rrp42 subfamily. As to quaternary structure, component of the archaeal exosome complex. Forms a hexameric ring-like arrangement composed of 3 Rrp41-Rrp42 heterodimers. The hexameric ring associates with a trimer of Rrp4 and/or Csl4 subunits.

It is found in the cytoplasm. Its function is as follows. Non-catalytic component of the exosome, which is a complex involved in RNA degradation. Contributes to the structuring of the Rrp41 active site. The protein is Exosome complex component Rrp42 of Methanopyrus kandleri (strain AV19 / DSM 6324 / JCM 9639 / NBRC 100938).